A 103-amino-acid polypeptide reads, in one-letter code: MSLLEQVSVSKKANIYFDGRVASRSVFFADGSKQTLGVVQPGEYEFSTSQGEIMEVISGRFEVLLPETTTWQEFSEGTQFELAANVSFKIRNTAIAEYCCSYL.

Belongs to the nucleoside phosphorylase PpnP family.

The enzyme catalyses a purine D-ribonucleoside + phosphate = a purine nucleobase + alpha-D-ribose 1-phosphate. It catalyses the reaction adenosine + phosphate = alpha-D-ribose 1-phosphate + adenine. It carries out the reaction cytidine + phosphate = cytosine + alpha-D-ribose 1-phosphate. The catalysed reaction is guanosine + phosphate = alpha-D-ribose 1-phosphate + guanine. The enzyme catalyses inosine + phosphate = alpha-D-ribose 1-phosphate + hypoxanthine. It catalyses the reaction thymidine + phosphate = 2-deoxy-alpha-D-ribose 1-phosphate + thymine. It carries out the reaction uridine + phosphate = alpha-D-ribose 1-phosphate + uracil. The catalysed reaction is xanthosine + phosphate = alpha-D-ribose 1-phosphate + xanthine. In terms of biological role, catalyzes the phosphorolysis of diverse nucleosides, yielding D-ribose 1-phosphate and the respective free bases. Can use uridine, adenosine, guanosine, cytidine, thymidine, inosine and xanthosine as substrates. Also catalyzes the reverse reactions. In Shewanella baltica (strain OS155 / ATCC BAA-1091), this protein is Pyrimidine/purine nucleoside phosphorylase.